The following is a 381-amino-acid chain: Queuine tRNA-ribosyltransferase (381 aa).

The active-site Proton acceptor is the Asp89. Residues 89-93 (DSGGF), Asp143, Gln187, and Gly214 contribute to the substrate site. Residues 245–251 (GVGKPED) are RNA binding. Catalysis depends on Asp264, which acts as the Nucleophile. Positions 269–273 (TRNAR) are RNA binding; important for wobble base 34 recognition. Zn(2+)-binding residues include Cys302, Cys304, Cys307, and His333.

The protein belongs to the queuine tRNA-ribosyltransferase family. Homodimer. Within each dimer, one monomer is responsible for RNA recognition and catalysis, while the other monomer binds to the replacement base PreQ1. It depends on Zn(2+) as a cofactor.

The enzyme catalyses 7-aminomethyl-7-carbaguanine + guanosine(34) in tRNA = 7-aminomethyl-7-carbaguanosine(34) in tRNA + guanine. Its pathway is tRNA modification; tRNA-queuosine biosynthesis. Catalyzes the base-exchange of a guanine (G) residue with the queuine precursor 7-aminomethyl-7-deazaguanine (PreQ1) at position 34 (anticodon wobble position) in tRNAs with GU(N) anticodons (tRNA-Asp, -Asn, -His and -Tyr). Catalysis occurs through a double-displacement mechanism. The nucleophile active site attacks the C1' of nucleotide 34 to detach the guanine base from the RNA, forming a covalent enzyme-RNA intermediate. The proton acceptor active site deprotonates the incoming PreQ1, allowing a nucleophilic attack on the C1' of the ribose to form the product. After dissociation, two additional enzymatic reactions on the tRNA convert PreQ1 to queuine (Q), resulting in the hypermodified nucleoside queuosine (7-(((4,5-cis-dihydroxy-2-cyclopenten-1-yl)amino)methyl)-7-deazaguanosine). In Pectobacterium carotovorum subsp. carotovorum (strain PC1), this protein is Queuine tRNA-ribosyltransferase.